Here is a 182-residue protein sequence, read N- to C-terminus: ATP-dependent protease subunit HslV (182 aa).

T10 is an active-site residue. The Na(+) site is built by A166, C169, and S172.

Belongs to the peptidase T1B family. HslV subfamily. As to quaternary structure, a double ring-shaped homohexamer of HslV is capped on each side by a ring-shaped HslU homohexamer. The assembly of the HslU/HslV complex is dependent on binding of ATP.

The protein localises to the cytoplasm. The enzyme catalyses ATP-dependent cleavage of peptide bonds with broad specificity.. Allosterically activated by HslU binding. Its function is as follows. Protease subunit of a proteasome-like degradation complex believed to be a general protein degrading machinery. The protein is ATP-dependent protease subunit HslV of Rickettsia felis (strain ATCC VR-1525 / URRWXCal2) (Rickettsia azadi).